Here is a 516-residue protein sequence, read N- to C-terminus: Importin subunit alpha-B (516 aa).

The segment covering 1–29 (MQRSKQETRKSQYKKSIDSDESRRKREEA) has biased composition (basic and acidic residues). The interval 1-54 (MQRSKQETRKSQYKKSIDSDESRRKREEASLSIRKNKREESLLKKRTQAVPGST) is disordered. One can recognise an IBB domain in the interval 1–55 (MQRSKQETRKSQYKKSIDSDESRRKREEASLSIRKNKREESLLKKRTQAVPGSTP). ARM repeat units lie at residues 55 to 96 (PVKV…KLLS), 100 to 140 (SPPI…NIAS), 143 to 182 (PEQTRVVIENGAIQVFVLLLSSPHDDVREQAVWALGNIAG), 185 to 227 (HYCR…NFCR), 229 to 268 (KPQPPFEIVRASLPVLAKLIYYQDEEVLIDACWALSYLSD), 271 to 310 (NERIQEVIDAKVCRKMVELLGHPTIAVQTPALRTIGNIVT), 313 to 352 (DNQTQIVLSVQALSHLLNLLQSPKRAIRKEACWTISNITA), 355 to 394 (KNQIQQVIDANIIPSLVYLLANAEFEIQKEAAWAISNATS), and 398 to 437 (PQQIHFLVSQGCVKPLCDLLKVSDPRIINVALEGIENILV). Positions 490–516 (EQEDEGDLMPEGSSFSFSNQTNSNFNL) are disordered. Residues 502-516 (SSFSFSNQTNSNFNL) show a composition bias toward low complexity.

The protein belongs to the importin alpha family. As to quaternary structure, forms a complex with tnpo/importin subunit beta.

Its subcellular location is the cytoplasm. It localises to the nucleus envelope. Its function is as follows. Functions in nuclear protein import via a substrate-importin alpha-beta transport complex that passes though the nuclear pore complexes (NPC). Binds specifically and directly to substrates containing either a simple or bipartite NLS motif. This is Importin subunit alpha-B from Dictyostelium discoideum (Social amoeba).